Consider the following 184-residue polypeptide: UPF0398 protein BAA_1648 (184 aa).

This sequence belongs to the UPF0398 family.

This is UPF0398 protein BAA_1648 from Bacillus anthracis (strain A0248).